The sequence spans 503 residues: Chromodomain Y-like protein 2 (503 aa).

In terms of domain architecture, Chromo spans 7–67; it reads YEVERIVDKR…LHLSKDKRVK (61 aa). The disordered stretch occupies residues 66 to 177; the sequence is VKSGKQAGAS…GNGSHQPDLE (112 aa). Positions 88–98 are enriched in basic and acidic residues; sequence RLSHRPLEPGK. Basic residues predominate over residues 101 to 120; that stretch reads PSSHKRKRVNSPLSRPKKGS. The span at 130–140 shows a compositional bias: polar residues; the sequence is KTVSYRTTPSG.

Interacts (via chromo domain) with histone H3K9me3.

It is found in the nucleus. The sequence is that of Chromodomain Y-like protein 2 (Cdyl2) from Mus musculus (Mouse).